Reading from the N-terminus, the 284-residue chain is MSAKVLNGTELAAKVKAGLKAKIDELKSKGINPGLAVIIVGDDPASRVYVNHKKNDCTEIGIKSFEYALPESTSEEELLDLIETLNNDASVNGILVQLPIPKHINEEKVIAAISPDKDADCFHPMNVGKLMIGKPEFLPCTPAGVVELLEENGIEISGKNCVVVGRSNIVGKPQAILLLAKNATVTICHSKTANIEEVCRSADVLVVAIGKSEFIKPEFVKPGAVVIDVGVSRGADGKLVGDVQFAEVAEIASAITKVTGGVGPMTRAMLMKNTYKAVLLQNGL.

NADP(+) contacts are provided by residues 165–167 (GRS), Ser-190, and Val-231.

It belongs to the tetrahydrofolate dehydrogenase/cyclohydrolase family. As to quaternary structure, homodimer.

The enzyme catalyses (6R)-5,10-methylene-5,6,7,8-tetrahydrofolate + NADP(+) = (6R)-5,10-methenyltetrahydrofolate + NADPH. The catalysed reaction is (6R)-5,10-methenyltetrahydrofolate + H2O = (6R)-10-formyltetrahydrofolate + H(+). It functions in the pathway one-carbon metabolism; tetrahydrofolate interconversion. Catalyzes the oxidation of 5,10-methylenetetrahydrofolate to 5,10-methenyltetrahydrofolate and then the hydrolysis of 5,10-methenyltetrahydrofolate to 10-formyltetrahydrofolate. The sequence is that of Bifunctional protein FolD from Ruminiclostridium cellulolyticum (strain ATCC 35319 / DSM 5812 / JCM 6584 / H10) (Clostridium cellulolyticum).